A 77-amino-acid chain; its full sequence is Conotoxin S6.11 (77 aa).

The first 19 residues, 1–19, serve as a signal peptide directing secretion; it reads MEKLTILLLVAAVLMSTQA. Positions 20-50 are excised as a propeptide; the sequence is LIQGGLDERQKAKSNFFSKRKSNAESWWEGE. 3 cysteine pairs are disulfide-bonded: Cys51-Cys65, Cys58-Cys69, and Cys64-Cys74.

Belongs to the conotoxin O2 superfamily. As to expression, expressed by the venom duct.

The protein localises to the secreted. This Conus striatus (Striated cone) protein is Conotoxin S6.11.